The primary structure comprises 249 residues: MSSIGTGYDLSVTTFSPDGRVFQIEYAAKAVDNSGTVVGIKCKDGIVMGVEKLIASKMMLPGSNRRIHSVHRHAGMAVAGLAADGRQIVARAKSEARSYESVYGDAVPVKELSERVASYVHLCTLYWWLRPFGCGVILGGYDRDGPQLYMIEPSGISYRYFGAAIGKGKQAAKTEIEKLNLSEMTCKEGVIEVAKIIYKLHDEAKDKAFELEMSWICEESKREHQKVPDDLLEEAKTAAKTALEEMDAD.

Ser2 carries the N-acetylserine modification. Residues Ser214 and Ser220 each carry the O-acetylserine modification. Residue Lys221 forms a Glycyl lysine isopeptide (Lys-Gly) (interchain with G-Cter in ubiquitin) linkage.

The protein belongs to the peptidase T1A family. As to quaternary structure, component of the 20S core complex of the 26S proteasome. The 26S proteasome is composed of a core protease (CP), known as the 20S proteasome, capped at one or both ends by the 19S regulatory particle (RP/PA700). The 20S proteasome core is composed of 28 subunits that are arranged in four stacked rings, resulting in a barrel-shaped structure. The two end rings are each formed by seven alpha subunits, and the two central rings are each formed by seven beta subunits. The catalytic chamber with the active sites is on the inside of the barrel. Ubiquitous low levels.

Its subcellular location is the cytoplasm. It is found in the nucleus. In terms of biological role, the proteasome is a multicatalytic proteinase complex which is characterized by its ability to cleave peptides with Arg, Phe, Tyr, Leu, and Glu adjacent to the leaving group at neutral or slightly basic pH. The proteasome has an ATP-dependent proteolytic activity. The sequence is that of Proteasome subunit alpha type-3 (PAG1) from Arabidopsis thaliana (Mouse-ear cress).